We begin with the raw amino-acid sequence, 759 residues long: Glycerol-3-phosphate O-acyltransferase 1 (759 aa).

At 1–48 the chain is on the lumenal side; it reads MPAPKLTEKFASSKSTQKTTNYSSIEAKSVKTSADQAYIYQEPSATKK. Residues 49–69 form a helical membrane-spanning segment; that stretch reads ILYSIATWLLYNIFHCFFREI. Residues 70–434 are Cytoplasmic-facing; that stretch reads RGRGSFKVPQ…AKVNFAKNLG (365 aa). Positions 414–419 match the HXXXXD motif motif; the sequence is HYNLPD. Residues 435–449 form a helical membrane-spanning segment; that stretch reads LVFFRSIGLCILFSL. Position 450 (A450) is a topological domain, lumenal. Residues 451 to 465 form a helical membrane-spanning segment; the sequence is MPGIIMFSPVFILAK. The Cytoplasmic portion of the chain corresponds to 466-493; sequence RISQEKARTALSKSTVKIKANDVIATWK. A helical membrane pass occupies residues 494 to 514; that stretch reads ILIGMGFAPLLYIFWSVLITY. Residues 515–523 are Lumenal-facing; it reads YLRHKPWNK. A helical membrane pass occupies residues 524 to 544; that stretch reads IYVFSGSYISCVIVTYSALIV. At 545–759 the chain is on the cytoplasmic side; sequence GDIGMDGFKS…EEEEGKEGDA (215 aa). Disordered regions lie at residues 613 to 667, 684 to 705, and 729 to 759; these read EEDR…SLVN, RKSE…EFEV, and IGEN…EGDA. The span at 647-659 shows a compositional bias: basic and acidic residues; sequence RDNHDAYEHHNQD. Low complexity predominate over residues 688-702; sequence SSLASTSVAPSSSSE. The segment covering 736-759 has biased composition (acidic residues); it reads EEEEEEEEEEEEEEEEEEGKEGDA.

It belongs to the GPAT/DAPAT family.

The protein localises to the endoplasmic reticulum membrane. The catalysed reaction is sn-glycerol 3-phosphate + an acyl-CoA = a 1-acyl-sn-glycero-3-phosphate + CoA. It catalyses the reaction dihydroxyacetone phosphate + an acyl-CoA = a 1-acylglycerone 3-phosphate + CoA. It carries out the reaction sn-glycerol 3-phosphate + hexadecanoyl-CoA = 1-hexadecanoyl-sn-glycero-3-phosphate + CoA. The enzyme catalyses (9Z)-hexadecenoyl-CoA + sn-glycerol 3-phosphate = 1-(9Z-hexadecenoyl)-sn-glycero-3-phosphate + CoA. The catalysed reaction is sn-glycerol 3-phosphate + octadecanoyl-CoA = 1-octadecanoyl-sn-glycero-3-phosphate + CoA. It catalyses the reaction sn-glycerol 3-phosphate + (9Z)-octadecenoyl-CoA = 1-(9Z-octadecenoyl)-sn-glycero-3-phosphate + CoA. It functions in the pathway phospholipid metabolism; CDP-diacylglycerol biosynthesis; CDP-diacylglycerol from sn-glycerol 3-phosphate: step 1/3. In terms of biological role, dual substrate-specific glycerol-3-phosphate/dihydroxyacetone phosphate sn-1 acyltransferase, catalyzing the first and committed reaction in the de novo synthesis of glycerophospholipids and triacylglycerols (TAGs). Prefers Gly-3-P over dihydroxyacetone phosphate and has a marked preference for 16-carbon fatty acyl chains. Transfers a fatty acid from fatty acyl-CoA to the sn-1 position of glycerol-3-phosphate to produce lysophosphatidic acid (LysoPA). These lipids not only are precursors of glycerolipids, but also are dynamic components of signal transduction systems that control cell physiology. SCT1 is the primary supplier of diacylglycerols (DAG), used mainly in TAG synthesis and phosphatidylcholine (PC) synthesis through the CDP-choline pathway. Regulates fatty acid desaturation, that is, the ratio of unsaturated versus saturated fatty acyl chains, by competing with the desaturase OLE1 for the common substrate C16:0-CoA. Sequesters C16:0-CoA into lipids, thereby shielding it from desaturation by OLE1. In Saccharomyces cerevisiae (strain ATCC 204508 / S288c) (Baker's yeast), this protein is Glycerol-3-phosphate O-acyltransferase 1.